The sequence spans 370 residues: Quinolinate synthase (370 aa).

Iminosuccinate contacts are provided by histidine 62 and serine 83. Residue cysteine 128 coordinates [4Fe-4S] cluster. Iminosuccinate-binding positions include 154 to 156 (YAN) and serine 171. Residue cysteine 215 coordinates [4Fe-4S] cluster. Iminosuccinate is bound by residues 241–243 (HPE) and threonine 258. Cysteine 312 contacts [4Fe-4S] cluster.

The protein belongs to the quinolinate synthase family. Type 1 subfamily. The cofactor is [4Fe-4S] cluster.

The protein localises to the cytoplasm. The catalysed reaction is iminosuccinate + dihydroxyacetone phosphate = quinolinate + phosphate + 2 H2O + H(+). The protein operates within cofactor biosynthesis; NAD(+) biosynthesis; quinolinate from iminoaspartate: step 1/1. Catalyzes the condensation of iminoaspartate with dihydroxyacetone phosphate to form quinolinate. The chain is Quinolinate synthase from Neisseria meningitidis serogroup C (strain 053442).